The primary structure comprises 61 residues: Large ribosomal subunit protein uL30 (61 aa).

It belongs to the universal ribosomal protein uL30 family. As to quaternary structure, part of the 50S ribosomal subunit.

The sequence is that of Large ribosomal subunit protein uL30 from Corynebacterium glutamicum (strain ATCC 13032 / DSM 20300 / JCM 1318 / BCRC 11384 / CCUG 27702 / LMG 3730 / NBRC 12168 / NCIMB 10025 / NRRL B-2784 / 534).